We begin with the raw amino-acid sequence, 347 residues long: GMP reductase (347 aa).

108–131 (ADFEKTKQILDLNPALNFVCIDVA) is an NADP(+) binding site. K(+)-binding residues include glycine 181 and glycine 183. Cysteine 186 serves as the catalytic Thioimidate intermediate. Position 216-239 (216-239 (IVSDGGCTTPGDVAKAFGGGADFV)) interacts with NADP(+).

This sequence belongs to the IMPDH/GMPR family. GuaC type 1 subfamily. As to quaternary structure, homotetramer.

The catalysed reaction is IMP + NH4(+) + NADP(+) = GMP + NADPH + 2 H(+). Its function is as follows. Catalyzes the irreversible NADPH-dependent deamination of GMP to IMP. It functions in the conversion of nucleobase, nucleoside and nucleotide derivatives of G to A nucleotides, and in maintaining the intracellular balance of A and G nucleotides. The protein is GMP reductase of Shigella dysenteriae serotype 1 (strain Sd197).